Here is a 541-residue protein sequence, read N- to C-terminus: Chaperonin GroEL 5 (541 aa).

Residues 30 to 33 (TLGP), glycine 415, and aspartate 496 contribute to the ATP site.

It belongs to the chaperonin (HSP60) family. As to quaternary structure, forms a cylinder of 14 subunits composed of two heptameric rings stacked back-to-back. Interacts with the co-chaperonin GroES.

The protein localises to the cytoplasm. The enzyme catalyses ATP + H2O + a folded polypeptide = ADP + phosphate + an unfolded polypeptide.. Functionally, together with its co-chaperonin GroES, plays an essential role in assisting protein folding. The GroEL-GroES system forms a nano-cage that allows encapsulation of the non-native substrate proteins and provides a physical environment optimized to promote and accelerate protein folding. The protein is Chaperonin GroEL 5 of Bradyrhizobium diazoefficiens (strain JCM 10833 / BCRC 13528 / IAM 13628 / NBRC 14792 / USDA 110).